The chain runs to 201 residues: 3-isopropylmalate dehydratase small subunit (201 aa).

Belongs to the LeuD family. LeuD type 1 subfamily. Heterodimer of LeuC and LeuD.

The enzyme catalyses (2R,3S)-3-isopropylmalate = (2S)-2-isopropylmalate. It participates in amino-acid biosynthesis; L-leucine biosynthesis; L-leucine from 3-methyl-2-oxobutanoate: step 2/4. Functionally, catalyzes the isomerization between 2-isopropylmalate and 3-isopropylmalate, via the formation of 2-isopropylmaleate. This is 3-isopropylmalate dehydratase small subunit from Shigella boydii serotype 18 (strain CDC 3083-94 / BS512).